A 191-amino-acid chain; its full sequence is Small ribosomal subunit protein uS10c (191 aa).

A chloroplast-targeting transit peptide spans M1–F56.

It belongs to the universal ribosomal protein uS10 family. As to quaternary structure, part of the 30S ribosomal subunit.

Its subcellular location is the plastid. The protein resides in the chloroplast. The chain is Small ribosomal subunit protein uS10c (RPS10) from Arabidopsis thaliana (Mouse-ear cress).